The primary structure comprises 180 residues: UPF0227 protein Shew_1627 (180 aa).

Belongs to the UPF0227 family.

In Shewanella loihica (strain ATCC BAA-1088 / PV-4), this protein is UPF0227 protein Shew_1627.